Here is a 235-residue protein sequence, read N- to C-terminus: Large ribosomal subunit protein uL1 (235 aa).

The protein belongs to the universal ribosomal protein uL1 family. In terms of assembly, part of the 50S ribosomal subunit.

Its function is as follows. Binds directly to 23S rRNA. The L1 stalk is quite mobile in the ribosome, and is involved in E site tRNA release. In terms of biological role, protein L1 is also a translational repressor protein, it controls the translation of the L11 operon by binding to its mRNA. The chain is Large ribosomal subunit protein uL1 from Mycobacterium leprae (strain Br4923).